Reading from the N-terminus, the 416-residue chain is Tryptophan synthase beta chain (416 aa).

Lys-109 is modified (N6-(pyridoxal phosphate)lysine).

It belongs to the TrpB family. As to quaternary structure, tetramer of two alpha and two beta chains. Pyridoxal 5'-phosphate is required as a cofactor.

It catalyses the reaction (1S,2R)-1-C-(indol-3-yl)glycerol 3-phosphate + L-serine = D-glyceraldehyde 3-phosphate + L-tryptophan + H2O. The protein operates within amino-acid biosynthesis; L-tryptophan biosynthesis; L-tryptophan from chorismate: step 5/5. Functionally, the beta subunit is responsible for the synthesis of L-tryptophan from indole and L-serine. The polypeptide is Tryptophan synthase beta chain (Prochlorococcus marinus (strain SARG / CCMP1375 / SS120)).